We begin with the raw amino-acid sequence, 712 residues long: Ribosomal RNA large subunit methyltransferase K/L (712 aa).

The THUMP domain occupies 43–154 (LAYRITLWTR…NGQLTISMNF (112 aa)).

It belongs to the methyltransferase superfamily. RlmKL family.

It localises to the cytoplasm. It carries out the reaction guanosine(2445) in 23S rRNA + S-adenosyl-L-methionine = N(2)-methylguanosine(2445) in 23S rRNA + S-adenosyl-L-homocysteine + H(+). The enzyme catalyses guanosine(2069) in 23S rRNA + S-adenosyl-L-methionine = N(2)-methylguanosine(2069) in 23S rRNA + S-adenosyl-L-homocysteine + H(+). Specifically methylates the guanine in position 2445 (m2G2445) and the guanine in position 2069 (m7G2069) of 23S rRNA. The sequence is that of Ribosomal RNA large subunit methyltransferase K/L from Shewanella frigidimarina (strain NCIMB 400).